A 5098-amino-acid polypeptide reads, in one-letter code: Auxin transport protein BIG (5098 aa).

An N-acetylalanine modification is found at Ala2. Helical transmembrane passes span 1150–1170 (AILL…NGLL) and 1458–1478 (LAAE…IGTL). A compositionally biased stretch (acidic residues) spans 1539–1549 (SVDEDEDDGTS). Positions 1539–1562 (SVDEDEDDGTSDGEVASLDKEDEE) are disordered. The UBR-type zinc finger occupies 1573–1644 (KVCTFTSSGS…RGSSCQCLKP (72 aa)). The segment at 2613-2672 (SVQYCCDGCSTVPILRRRWHCTVCPDFDLCEACYEVLDADRLPPPHTRDHPMTAIPIEVE) adopts a ZZ-type zinc-finger fold. 8 residues coordinate Zn(2+): Cys2618, Cys2621, Cys2633, Cys2636, Cys2642, Cys2645, His2658, and His2662. Residues 2813 to 2833 (SSLGEIVILVFMFFTLMLRSW) traverse the membrane as a helical segment. Residues 3149–3174 (EVVTGSNRSGSQSVDSKKKKKGEDGH) are disordered. Positions 3151–3162 (VTGSNRSGSQSV) are enriched in polar residues. An MYND-type; degenerate zinc finger spans residues 3464–3504 (CPRCSRPVTDKHGICSNCHENAYQCRQCRNINYENLDSFLC). Coiled-coil stretches lie at residues 3537–3557 (KKGL…YQQL) and 4313–4333 (LEIL…NQEE). Positions 4569–5098 (PSVPLILSML…QFVRSAIDKD (530 aa)) are UBR4 E3 catalytic module. Residues 4698-4817 (GLACMVCREG…WDNLNALGRA (120 aa)) form a HemiRING-type zinc finger. The Zn(2+) site is built by Cys4701, Cys4704, His4751, and Cys4754. In terms of domain architecture, UZI spans 4820–5098 (SRLRLLTYDI…QFVRSAIDKD (279 aa)). Residues 4891 to 4903 (SSTSTATAPSSDS) are compositionally biased toward low complexity. The segment at 4891 to 4915 (SSTSTATAPSSDSRPLTPGSQLSST) is disordered.

It belongs to the UBR4 family. Constitutively expressed in roots, rosette leaves, inflorescence stems, and flowers. Present in inflorescence meristems, floral meristems and vascular tissues.

Its subcellular location is the membrane. Required for auxin efflux and polar auxin transport (PAT) influencing auxin-mediated developmental responses (e.g. cell elongation, apical dominance, lateral root production, inflorescence architecture, general growth and development). Controls the elongation of the pedicels and stem internodes through auxin action. Involved in the expression modulation of light-regulated genes. Represses CAB1 and CAB3 genes expression in etiolated seedlings. Confers sensitivity to the auxin transport inhibitors N-1-naphthylphthalamic acid (NPA), 2-carboxyphenyl-3-phenylpropane-l,2-dione (CPD), and methyl-2-chloro-9-hydroxyfluorene-9-carboxylate (CFM). Influences the polarized subcellular distribution of the auxin transporter PIN1 in response to auxin transport inhibitors. Plays a role in the regulation of responses to phytohormones such as auxin, cytokinins, ethylene and gibberellic acid (GA), particularly during light-mediated stimuli (e.g. shade ovoidance, etiolation). Required for pericycle cell activation to form lateral root primordia (LRP) in both high and low phosphate P conditions. Necessary for the plant-growth promotion and lateral root development mediated by the fungus Trichoderma virens. This Arabidopsis thaliana (Mouse-ear cress) protein is Auxin transport protein BIG (BIG).